The sequence spans 251 residues: Pyruvate formate-lyase-activating enzyme (251 aa).

The Radical SAM core domain occupies 15–244 (VDGPGLRYIL…KEAYRYVNFN (230 aa)). [4Fe-4S] cluster is bound by residues cysteine 29, cysteine 33, and cysteine 36. S-adenosyl-L-methionine contacts are provided by residues 35 to 37 (YCH), glycine 79, 134 to 136 (DIK), and histidine 207.

It belongs to the organic radical-activating enzymes family. [4Fe-4S] cluster is required as a cofactor.

It is found in the cytoplasm. The enzyme catalyses glycyl-[formate C-acetyltransferase] + reduced [flavodoxin] + S-adenosyl-L-methionine = glycin-2-yl radical-[formate C-acetyltransferase] + semiquinone [flavodoxin] + 5'-deoxyadenosine + L-methionine + H(+). In terms of biological role, activation of pyruvate formate-lyase under anaerobic conditions by generation of an organic free radical, using S-adenosylmethionine and reduced flavodoxin as cosubstrates to produce 5'-deoxy-adenosine. The polypeptide is Pyruvate formate-lyase-activating enzyme (pflA) (Staphylococcus epidermidis (strain ATCC 12228 / FDA PCI 1200)).